Here is an 88-residue protein sequence, read N- to C-terminus: Small ribosomal subunit protein uS15 (88 aa).

The protein belongs to the universal ribosomal protein uS15 family. Part of the 30S ribosomal subunit. Forms a bridge to the 50S subunit in the 70S ribosome, contacting the 23S rRNA.

Its function is as follows. One of the primary rRNA binding proteins, it binds directly to 16S rRNA where it helps nucleate assembly of the platform of the 30S subunit by binding and bridging several RNA helices of the 16S rRNA. Functionally, forms an intersubunit bridge (bridge B4) with the 23S rRNA of the 50S subunit in the ribosome. The protein is Small ribosomal subunit protein uS15 of Opitutus terrae (strain DSM 11246 / JCM 15787 / PB90-1).